A 1002-amino-acid chain; its full sequence is MAAHEWDWFQREELIGQISDIRVQNLQVERENVQKRTFTRWINLHLEKCNPPLEVKDLFVDIQDGKILMALLEVLSGRNLLHEYKSSSHRIFRLNNIAKALKFLEDSNVKLVSIDAAEIADGNPSLVLGLIWNIILFFQIKELTGNLSRNSPSSSLSPGSGGTDSDSSFPPTPTAERSVAISVKDQRKAIKALLAWVQRKTRKYGVAVQDFAGSWRSGLAFLAVIKAIDPSLVDMKQALENSTRENLEKAFSIAQDALHIPRLLEPEDIMVDTPDEQSIMTYVAQFLERFPELEAEDIFDSDKEVPIESTFVRIKETPSEQESKVFVLTENGERTYTVNHETSHPPPSKVFVCDKPESMKEFRLDGVSSHALSDSSTEFMHQIIDQVLQGGPGKTSDISEPSPESSILSSRKENGRSNSLPIKKTVHFEADTYKDPFCSKNLSLCFEGSPRVAKESLRQDGHVLAVEVAEEKEQKQESSKIPESSSDKVAGDIFLVEGTNNNSQSSSCNGALESTARHDEESHSLSPPGENTVMADSFQIKVNLMTVEALEEGDYFEAIPLKASKFNSDLIDFASTSQAFNKVPSPHETKPDEDAEAFENHAEKLGKRSIKSAHKKKDSPEPQVKMDKHEPHQDSGEEAEGCPSAPEETPVDKKPEVHEKAKRKSTRPHYEEEGEDDDLQGVGEELSSSPPSSCVSLETLGSHSEEGLDFKPSPPLSKVSVIPHDLFYFPHYEVPLAAVLEAYVEDPEDLKNEEMDLEEPEGYMPDLDSREEEADGSQSSSSSSVPGESLPSASDQVLYLSRGGVGTTPASEPAPLAPHEDHQQRETKENDPMDSHQSQESPNLENIANPLEENVTKESISSKKKEKRKHVDHVESSLFVAPGSVQSSDDLEEDSSDYSIPSRTSHSDSSIYLRRHTHRSSESDHFSYVQLRNAADLDDRRNRILTRKANSSGEAMSLGSHSPQSDSLTQLVQQPDMMYFILFLWLLVYCLLLFPQLDVSRL.

The interval 1-288 is actin-binding; the sequence is MAAHEWDWFQ…IMTYVAQFLE (288 aa). Positions 32–139 constitute a Calponin-homology (CH) 1 domain; the sequence is NVQKRTFTRW…LIWNIILFFQ (108 aa). Positions 149-168 are enriched in low complexity; the sequence is RNSPSSSLSPGSGGTDSDSS. The disordered stretch occupies residues 149–180; it reads RNSPSSSLSPGSGGTDSDSSFPPTPTAERSVA. One can recognise a Calponin-homology (CH) 2 domain in the interval 187–291; that stretch reads RKAIKALLAW…YVAQFLERFP (105 aa). 2 positions are modified to phosphoserine: Ser-301 and Ser-402. Disordered regions lie at residues 389–418, 500–532, 581–716, and 749–911; these read QGGP…GRSN, NNNS…GENT, NKVP…SPPL, and DLKN…DSSI. Over residues 396-409 the composition is skewed to low complexity; that stretch reads SDISEPSPESSILS. Polar residues predominate over residues 500–509; sequence NNNSQSSSCN. Residues 585–606 are compositionally biased toward basic and acidic residues; sequence SPHETKPDEDAEAFENHAEKLG. Over residues 607–617 the composition is skewed to basic residues; that stretch reads KRSIKSAHKKK. Basic and acidic residues-rich tracts occupy residues 618–635 and 650–659; these read DSPE…HQDS and PVDKKPEVHE. Residue Ser-619 is modified to Phosphoserine. Low complexity predominate over residues 681-697; the sequence is GVGEELSSSPPSSCVSL. Thr-699 is modified (phosphothreonine). Phosphoserine occurs at positions 713 and 769. The span at 776-794 shows a compositional bias: low complexity; it reads GSQSSSSSSVPGESLPSAS. Residues 818–834 show a composition bias toward basic and acidic residues; the sequence is PHEDHQQRETKENDPMD. The span at 835–846 shows a compositional bias: polar residues; that stretch reads SHQSQESPNLEN. Residues Ser-838 and Ser-841 each carry the phosphoserine modification. The span at 854-863 shows a compositional bias: basic and acidic residues; the sequence is NVTKESISSK. The span at 898 to 910 shows a compositional bias: polar residues; the sequence is YSIPSRTSHSDSS. Position 907 is a phosphoserine (Ser-907). A helical; Anchor for type IV membrane protein membrane pass occupies residues 977 to 997; the sequence is MMYFILFLWLLVYCLLLFPQL.

Widely expressed at intermediate level.

The protein resides in the membrane. The protein is Calmin (CLMN) of Homo sapiens (Human).